Here is a 123-residue protein sequence, read N- to C-terminus: Omega-oxotoxin-Ot1a (123 aa).

The signal sequence occupies residues 1-16 (MKIVLVFVCTLYLAQA). A propeptide spanning residues 17–54 (TYLSEQDVNEVSEFLEALDQANEAASEMVEAAETEEAR) is cleaved from the precursor. In terms of domain architecture, Oxytoxin-type inhibitor cystine knot (ICK) spans 55–122 (DWECLPLHSS…GKINTCDKYK (68 aa)). 5 disulfides stabilise this stretch: C58/C72, C65/C77, C69/C118, C71/C106, and C79/C104.

Belongs to the spiderine family. Spiderine subfamily. Mass spectrometry data suggest a carboxylated free C-terminal residue. In terms of tissue distribution, expressed by the venom gland.

Its subcellular location is the secreted. Functionally, weak blocker of vertebrate P/Q-, N- and L-type voltage-gated calcium channels (Cav1 and Cav2). Is both paralytic and lethal when injected into lepidopteran larvae. Is not toxic to mice. The polypeptide is Omega-oxotoxin-Ot1a (Oxyopes takobius (Lynx spider)).